Reading from the N-terminus, the 285-residue chain is MRWLLPLSRTVTLAVVRLRRGICGLGMFYAVRRGRRTGVFLSWSECKAQVDRFPAARFKKFATEDEAWAFVRSSSSPDGSKGQESAHEQKSQAKTSKRPREPLGEGEELPEPGPKHTRQDTEPAAVVSKDTFSYMGESVIVYTDGCCSSNGRKRARAGIGVYWGPGHPLNVGIRLPGRQTNQRAEIHAACKAIMQAKAQNISKLVLYTDSMFTINGITNWVQGWKKNGWRTSTGKDVINKEDFMELDELTQGMDIQWMHIPGHSGFVGNEEADRLAREGAKQSED.

The tract at residues 72 to 126 is disordered; the sequence is RSSSSPDGSKGQESAHEQKSQAKTSKRPREPLGEGEELPEPGPKHTRQDTEPAAV. Residues 135–281 form the RNase H type-1 domain; the sequence is MGESVIVYTD…ADRLAREGAK (147 aa). Positions 144, 185, 209, and 273 each coordinate Mg(2+).

It belongs to the RNase H family. In terms of assembly, monomer. Mg(2+) is required as a cofactor.

Its subcellular location is the cytoplasm. The enzyme catalyses Endonucleolytic cleavage to 5'-phosphomonoester.. In the presence of magnesium, manganese is inhibitory. Endonuclease that specifically degrades the RNA of RNA-DNA hybrids. Plays a role in RNA polymerase II (RNAp II) transcription termination by degrading R-loop RNA-DNA hybrid formation at G-rich pause sites located downstream of the poly(A) site and behind the elongating RNAp II. The sequence is that of Ribonuclease H1 (Rnaseh1) from Mus musculus (Mouse).